We begin with the raw amino-acid sequence, 615 residues long: ATP-dependent RNA helicase mrh4, mitochondrial (615 aa).

A mitochondrion-targeting transit peptide spans 1–37; that stretch reads MLRPKAGKCLLCSFRAAQKPVSQKWPSRALSMRTRLP. The tract at residues 21–108 is disordered; it reads VSQKWPSRAL…HRDRDDKKDR (88 aa). The segment covering 90 to 108 has biased composition (basic and acidic residues); that stretch reads QERRTSRLDHRDRDDKKDR. Residues 138-171 carry the Q motif motif; sequence QSFEQFALLDSVKQAIFQQALPELKEHVPTPVQR. Residues 184 to 395 enclose the Helicase ATP-binding domain; that stretch reads RRPKSEMEQY…RKRFPDINRL (212 aa). 197 to 204 is an ATP binding site; that stretch reads AETGSGKT. The short motif at 342–345 is the DEAD box element; that stretch reads DEAD. The region spanning 444–615 is the Helicase C-terminal domain; sequence PVKGLMDVKR…EGMFEGKALI (172 aa).

This sequence belongs to the DEAD box helicase family. MRH4 subfamily.

The protein localises to the mitochondrion. The enzyme catalyses ATP + H2O = ADP + phosphate + H(+). ATP-binding RNA helicase involved in mitochondrial RNA metabolism. Required for maintenance of mitochondrial DNA. This chain is ATP-dependent RNA helicase mrh4, mitochondrial (mrh4), found in Sclerotinia sclerotiorum (strain ATCC 18683 / 1980 / Ss-1) (White mold).